A 340-amino-acid polypeptide reads, in one-letter code: MGSTGKIKIGINGFGRIGRLVARVALQRDDIELVAVNDPFISTESLTSLFKYDSVHGQWKKHEVKVKDEKTLLFGEKHVAVFGCRNPEEIPWGEVGAEYVVESTGVFTDKDKAAAHLKGGAKKVVISAPSKDAPMFVVGVNEHEYKSDLTIVSNASCTTNCLAPLAKVINDRFGIVEGLMTTVHSITATQKTVDGPSNKDWRGGRAAGFNIIPSSTGAAKAVGKVLPVLNGKLTGMCFRVPTQDVSVVDLTVKLEKSATYGEIKAAIKEESEGKLKGILGYTEDDVVSTDFIGDSRSSIFDAKAGIALNDNFVKLVSWYDNEWGYSSRVIDLIVHMDSTA.

Residues 16–17 (RI), Asp38, and Arg85 each bind NAD(+). D-glyceraldehyde 3-phosphate is bound by residues 156-158 (SCT), Thr187, 216-217 (TG), and Arg239. Cys157 acts as the Nucleophile in catalysis. Position 321 (Asn321) interacts with NAD(+).

This sequence belongs to the glyceraldehyde-3-phosphate dehydrogenase family. In terms of assembly, homotetramer.

It is found in the cytoplasm. It carries out the reaction D-glyceraldehyde 3-phosphate + phosphate + NAD(+) = (2R)-3-phospho-glyceroyl phosphate + NADH + H(+). It participates in carbohydrate degradation; glycolysis; pyruvate from D-glyceraldehyde 3-phosphate: step 1/5. Key enzyme in glycolysis that catalyzes the first step of the pathway by converting D-glyceraldehyde 3-phosphate (G3P) into 3-phospho-D-glyceroyl phosphate. Essential for the maintenance of cellular ATP levels and carbohydrate metabolism. This chain is Glyceraldehyde-3-phosphate dehydrogenase, cytosolic, found in Taxus baccata (English yew).